Consider the following 251-residue polypeptide: Adenosylcobinamide-GDP ribazoletransferase (251 aa).

Helical transmembrane passes span 36-56, 60-80, 110-130, 181-201, 202-222, and 231-251; these read LYPF…FVLS, VPIM…TGFL, VGAF…AGIF, EIIL…TLGI, NYLI…LKVK, and DVAG…LGII.

The protein belongs to the CobS family. The cofactor is Mg(2+).

The protein resides in the cell membrane. The enzyme catalyses alpha-ribazole + adenosylcob(III)inamide-GDP = adenosylcob(III)alamin + GMP + H(+). The catalysed reaction is alpha-ribazole 5'-phosphate + adenosylcob(III)inamide-GDP = adenosylcob(III)alamin 5'-phosphate + GMP + H(+). It functions in the pathway cofactor biosynthesis; adenosylcobalamin biosynthesis; adenosylcobalamin from cob(II)yrinate a,c-diamide: step 7/7. Functionally, joins adenosylcobinamide-GDP and alpha-ribazole to generate adenosylcobalamin (Ado-cobalamin). Also synthesizes adenosylcobalamin 5'-phosphate from adenosylcobinamide-GDP and alpha-ribazole 5'-phosphate. The chain is Adenosylcobinamide-GDP ribazoletransferase from Clostridium perfringens (strain SM101 / Type A).